Here is a 294-residue protein sequence, read N- to C-terminus: Tryptophan 2,3-dioxygenase 1 (294 aa).

The tract at residues 1–20 (MSEPIQPTRPAASGCPMHGA) is disordered. Residues 63–67 (FIVQH), Tyr125, and Arg129 contribute to the substrate site. Position 252 (His252) interacts with heme. Thr266 is a substrate binding site.

The protein belongs to the tryptophan 2,3-dioxygenase family. Homotetramer. Heme serves as cofactor.

It carries out the reaction L-tryptophan + O2 = N-formyl-L-kynurenine. The protein operates within amino-acid degradation; L-tryptophan degradation via kynurenine pathway; L-kynurenine from L-tryptophan: step 1/2. In terms of biological role, heme-dependent dioxygenase that catalyzes the oxidative cleavage of the L-tryptophan (L-Trp) pyrrole ring and converts L-tryptophan to N-formyl-L-kynurenine. Catalyzes the oxidative cleavage of the indole moiety. The protein is Tryptophan 2,3-dioxygenase 1 of Ralstonia nicotianae (strain ATCC BAA-1114 / GMI1000) (Ralstonia solanacearum).